Here is a 1225-residue protein sequence, read N- to C-terminus: Cytosolic carboxypeptidase 1 (1225 aa).

Over residues 366-392 (DDVVDESDDNEDTDAETEAEAENEDSD) the composition is skewed to acidic residues. Residues 366-398 (DDVVDESDDNEDTDAETEAEAENEDSDQICKND) are disordered. A Peptidase M14 domain is found at 842-1132 (YPYTYSTLKM…KFCVGLLRLK (291 aa)). Residues His914, Glu917, and His1011 each contribute to the Zn(2+) site. The active-site Proton donor/acceptor is Glu1096. Over residues 1181–1193 (YSAESNDDVDPDL) the composition is skewed to acidic residues. Residues 1181–1225 (YSAESNDDVDPDLPENIGDFETSTLEEESFSDSEITRTHMSGQST) are disordered.

It belongs to the peptidase M14 family. Zn(2+) serves as cofactor.

It localises to the cytoplasm. Its subcellular location is the cytosol. It is found in the nucleus. The protein resides in the mitochondrion. It carries out the reaction (L-glutamyl)(n+1)-gamma-L-glutamyl-L-glutamyl-[protein] + H2O = (L-glutamyl)(n)-gamma-L-glutamyl-L-glutamyl-[protein] + L-glutamate. The enzyme catalyses C-terminal L-alpha-aminoacyl-L-glutamyl-L-glutamyl-[tubulin] + H2O = C-terminal L-alpha-aminoacyl-L-glutamyl-[tubulin] + L-glutamate. Metallocarboxypeptidase that mediates protein deglutamylation of tubulin and non-tubulin target proteins. Catalyzes the removal of polyglutamate side chains present on the gamma-carboxyl group of glutamate residues within the C-terminal tail of alpha- and beta-tubulin. Specifically cleaves tubulin long-side-chains, while it is not able to remove the branching point glutamate. Also catalyzes the removal of polyglutamate residues from the carboxy-terminus of alpha-tubulin as well as non-tubulin proteins. This Xenopus laevis (African clawed frog) protein is Cytosolic carboxypeptidase 1 (agtpbp1).